Here is a 341-residue protein sequence, read N- to C-terminus: Ketol-acid reductoisomerase (NADP(+)) (341 aa).

Residues 2–182 (AKIYYNDDAD…GGTRAGVIET (181 aa)) enclose the KARI N-terminal Rossmann domain. Residues 25–28 (YGSQ), Ser51, Ser53, and 83–86 (DQVQ) each bind NADP(+). The active site involves His108. An NADP(+)-binding site is contributed by Gly134. The KARI C-terminal knotted domain occupies 183-328 (TFTEETESDL…RKLRSLFAWE (146 aa)). The Mg(2+) site is built by Asp191, Glu195, Glu227, and Glu231. Ser252 lines the substrate pocket.

This sequence belongs to the ketol-acid reductoisomerase family. It depends on Mg(2+) as a cofactor.

The enzyme catalyses (2R)-2,3-dihydroxy-3-methylbutanoate + NADP(+) = (2S)-2-acetolactate + NADPH + H(+). The catalysed reaction is (2R,3R)-2,3-dihydroxy-3-methylpentanoate + NADP(+) = (S)-2-ethyl-2-hydroxy-3-oxobutanoate + NADPH + H(+). It participates in amino-acid biosynthesis; L-isoleucine biosynthesis; L-isoleucine from 2-oxobutanoate: step 2/4. Its pathway is amino-acid biosynthesis; L-valine biosynthesis; L-valine from pyruvate: step 2/4. Functionally, involved in the biosynthesis of branched-chain amino acids (BCAA). Catalyzes an alkyl-migration followed by a ketol-acid reduction of (S)-2-acetolactate (S2AL) to yield (R)-2,3-dihydroxy-isovalerate. In the isomerase reaction, S2AL is rearranged via a Mg-dependent methyl migration to produce 3-hydroxy-3-methyl-2-ketobutyrate (HMKB). In the reductase reaction, this 2-ketoacid undergoes a metal-dependent reduction by NADPH to yield (R)-2,3-dihydroxy-isovalerate. The protein is Ketol-acid reductoisomerase (NADP(+)) of Kocuria rhizophila (strain ATCC 9341 / DSM 348 / NBRC 103217 / DC2201).